Here is a 642-residue protein sequence, read N- to C-terminus: 1,4-alpha-glucan branching enzyme GlgB (642 aa).

The Nucleophile role is filled by Asp-304. Glu-355 functions as the Proton donor in the catalytic mechanism.

This sequence belongs to the glycosyl hydrolase 13 family. GlgB subfamily. Monomer.

It catalyses the reaction Transfers a segment of a (1-&gt;4)-alpha-D-glucan chain to a primary hydroxy group in a similar glucan chain.. Its pathway is glycan biosynthesis; glycogen biosynthesis. Functionally, catalyzes the formation of the alpha-1,6-glucosidic linkages in glycogen by scission of a 1,4-alpha-linked oligosaccharide from growing alpha-1,4-glucan chains and the subsequent attachment of the oligosaccharide to the alpha-1,6 position. The protein is 1,4-alpha-glucan branching enzyme GlgB of Streptococcus pneumoniae serotype 2 (strain D39 / NCTC 7466).